Here is a 463-residue protein sequence, read N- to C-terminus: Asparagine--tRNA ligase (463 aa).

The protein belongs to the class-II aminoacyl-tRNA synthetase family. As to quaternary structure, homodimer.

Its subcellular location is the cytoplasm. It carries out the reaction tRNA(Asn) + L-asparagine + ATP = L-asparaginyl-tRNA(Asn) + AMP + diphosphate + H(+). The chain is Asparagine--tRNA ligase from Clostridium novyi (strain NT).